Here is a 488-residue protein sequence, read N- to C-terminus: Bifunctional protein GlmU (488 aa).

The tract at residues 1–237 (MPRTRTPLAA…AEEASGVNDR (237 aa)) is pyrophosphorylase. UDP-N-acetyl-alpha-D-glucosamine is bound by residues 13–16 (LAAG), Lys-27, Gln-82, 87–88 (GT), 110–112 (SGD), Gly-149, Glu-164, Asn-179, and Asn-235. Mg(2+) is bound at residue Asp-112. Asn-235 is a Mg(2+) binding site. Residues 238 to 258 (VELSRANRVMVGRLAEAFMRA) form a linker region. Positions 259 to 488 (GVTIEDPARF…KGRPAARRAS (230 aa)) are N-acetyltransferase. Positions 341 and 359 each coordinate UDP-N-acetyl-alpha-D-glucosamine. The active-site Proton acceptor is the His-371. UDP-N-acetyl-alpha-D-glucosamine-binding residues include Tyr-374 and Asn-385. Acetyl-CoA is bound by residues Ala-388, 394 to 395 (NY), Ser-413, Ala-431, and Arg-448. Residues 459-488 (AQRQAEKQMKGTATGPASARKGRPAARRAS) form a disordered region. The segment covering 478-488 (RKGRPAARRAS) has biased composition (basic residues).

In the N-terminal section; belongs to the N-acetylglucosamine-1-phosphate uridyltransferase family. The protein in the C-terminal section; belongs to the transferase hexapeptide repeat family. Homotrimer. Mg(2+) serves as cofactor.

Its subcellular location is the cytoplasm. It carries out the reaction alpha-D-glucosamine 1-phosphate + acetyl-CoA = N-acetyl-alpha-D-glucosamine 1-phosphate + CoA + H(+). The catalysed reaction is N-acetyl-alpha-D-glucosamine 1-phosphate + UTP + H(+) = UDP-N-acetyl-alpha-D-glucosamine + diphosphate. It participates in nucleotide-sugar biosynthesis; UDP-N-acetyl-alpha-D-glucosamine biosynthesis; N-acetyl-alpha-D-glucosamine 1-phosphate from alpha-D-glucosamine 6-phosphate (route II): step 2/2. It functions in the pathway nucleotide-sugar biosynthesis; UDP-N-acetyl-alpha-D-glucosamine biosynthesis; UDP-N-acetyl-alpha-D-glucosamine from N-acetyl-alpha-D-glucosamine 1-phosphate: step 1/1. The protein operates within bacterial outer membrane biogenesis; LPS lipid A biosynthesis. Its function is as follows. Catalyzes the last two sequential reactions in the de novo biosynthetic pathway for UDP-N-acetylglucosamine (UDP-GlcNAc). The C-terminal domain catalyzes the transfer of acetyl group from acetyl coenzyme A to glucosamine-1-phosphate (GlcN-1-P) to produce N-acetylglucosamine-1-phosphate (GlcNAc-1-P), which is converted into UDP-GlcNAc by the transfer of uridine 5-monophosphate (from uridine 5-triphosphate), a reaction catalyzed by the N-terminal domain. This Anaeromyxobacter dehalogenans (strain 2CP-1 / ATCC BAA-258) protein is Bifunctional protein GlmU.